The sequence spans 551 residues: MDRRRFIKGSMAMAAVCGTSGIASLFSQAAFAADSDIADGQTQRFDFSILQSMAHDLAQTAWRGAPRPLPDTLATMTPQAYNSIQYDAEKSLWHNVENRQLDAQFFHMGMGFRRRVRMFSVDPATHLAREIHFRPELFKYNDAGVDTKQLEGQSDLGFAGFRVFKAPELARRDVVSFLGASYFRAVDDTYQYGLSARGLAIDTYTDSKEEFPDFTAFWFDTVKPGATTFTVYALLDSASITGAYKFTIHCEKNQVIMDVENHLYARKDIKQLGIAPMTSMFSCGTNERRMCDTIHPQIHDSDRLSMWRGNGEWICRPLNNPQKLQFNAYTDNNPKGFGLLQLDRDFSHYQDIMGWYNKRPSLWVEPRNKWGKGTIGLMEIPTTGETLDNIVCFWQPEKAVKAGDEFAFQYRLYWSAQPPVHCPLARVMATRTGMGGFPEGWAPGEHYPEKWARRFAVDFVGGDLKAAAPKGIEPVITLSSGEAKQIEILYIEPIDGYRIQFDWYPTSDSTDPVDMRMYLRCQGDAISETWLYQYFPPAPDKRQYVDDRVMS.

The segment at residues 1–32 (MDRRRFIKGSMAMAAVCGTSGIASLFSQAAFA) is a signal peptide (tat-type signal).

It belongs to the OpgD/OpgG family. Post-translationally, predicted to be exported by the Tat system. The position of the signal peptide cleavage has not been experimentally proven.

The protein localises to the periplasm. It functions in the pathway glycan metabolism; osmoregulated periplasmic glucan (OPG) biosynthesis. Its function is as follows. Probably involved in the control of the structural glucose backbone of osmoregulated periplasmic glucans (OPGs). This chain is Glucans biosynthesis protein D, found in Escherichia coli O1:K1 / APEC.